The chain runs to 142 residues: Large ribosomal subunit protein uL11 (142 aa).

It belongs to the universal ribosomal protein uL11 family. Part of the ribosomal stalk of the 50S ribosomal subunit. Interacts with L10 and the large rRNA to form the base of the stalk. L10 forms an elongated spine to which L12 dimers bind in a sequential fashion forming a multimeric L10(L12)X complex. One or more lysine residues are methylated.

Functionally, forms part of the ribosomal stalk which helps the ribosome interact with GTP-bound translation factors. This is Large ribosomal subunit protein uL11 from Mycobacterium sp. (strain MCS).